The following is a 471-amino-acid chain: PTS system mannitol-specific EIICB component (471 aa).

Over 1–29 the chain is Cytoplasmic; it reads MTHTSENQAGFRVKIQRFGSYLSGMIMPN. Positions 18–342 constitute a PTS EIIC type-2 domain; that stretch reads FGSYLSGMIM…FFVASIFLKS (325 aa). The helical transmembrane segment at 30–51 threads the bilayer; it reads IGAFIAWGIITALFIPTGWLPN. Residues 52 to 55 lie on the Extracellular side of the membrane; sequence ETFA. A helical membrane pass occupies residues 56 to 76; the sequence is KLVGPMITYLLPLLIGYTGGK. The Cytoplasmic portion of the chain corresponds to 77-139; that stretch reads MIYDVRGGVV…QGFEMLVNNF (63 aa). A helical transmembrane segment spans residues 140-161; the sequence is SAGIIGGLLTLAAFKGVGPVVS. Topologically, residues 162–170 are extracellular; it reads AISKTLAAG. Residues 171 to 191 form a helical membrane-spanning segment; that stretch reads VEKIVDLHLLPLANIFIEPGK. Residues 192-278 are Cytoplasmic-facing; sequence VLFLNNAINH…VLMRPILILA (87 aa). A helical transmembrane segment spans residues 279–298; that stretch reads AIAGGVSGVLTFTIFDAGLV. The Extracellular segment spans residues 299 to 318; the sequence is AVPSPGSIFALLAMTPKGNY. Residues 319 to 340 traverse the membrane as a helical segment; it reads LGVLAGVLVATAVSFFVASIFL. The Cytoplasmic portion of the chain corresponds to 341–471; that stretch reads KSAKNNEEDI…YDELIEMLKK (131 aa). In terms of domain architecture, PTS EIIB type-2 spans 383–471; that stretch reads KKIVFACDAG…YDELIEMLKK (89 aa). The Phosphocysteine intermediate; for EIIB activity role is filled by cysteine 389. Cysteine 389 bears the Phosphocysteine; by EIIA mark.

Homodimer.

The protein localises to the cell membrane. It carries out the reaction D-mannitol(out) + N(pros)-phospho-L-histidyl-[protein] = D-mannitol 1-phosphate(in) + L-histidyl-[protein]. Functionally, the phosphoenolpyruvate-dependent sugar phosphotransferase system (sugar PTS), a major carbohydrate active transport system, catalyzes the phosphorylation of incoming sugar substrates concomitantly with their translocation across the cell membrane. The enzyme II CmtAB PTS system is involved in D-mannitol transport. The chain is PTS system mannitol-specific EIICB component from Geobacillus stearothermophilus (Bacillus stearothermophilus).